The following is a 63-amino-acid chain: uncharacterized protein (63 aa).

The helical transmembrane segment at isoleucine 38–phenylalanine 58 threads the bilayer.

It is found in the membrane. This is an uncharacterized protein from Saccharomyces cerevisiae (strain ATCC 204508 / S288c) (Baker's yeast).